A 77-amino-acid polypeptide reads, in one-letter code: Small ribosomal subunit protein bS21 (77 aa).

Basic and acidic residues predominate over residues 38–52 (KPSEKRAREKAEAIR). The interval 38 to 77 (KPSEKRAREKAEAIRRTRKLARKRAQREGIVSNGRTASVR) is disordered. Over residues 53-62 (RTRKLARKRA) the composition is skewed to basic residues.

This sequence belongs to the bacterial ribosomal protein bS21 family.

The sequence is that of Small ribosomal subunit protein bS21 from Bartonella bacilliformis (strain ATCC 35685 / KC583 / Herrer 020/F12,63).